We begin with the raw amino-acid sequence, 256 residues long: uncharacterized protein (256 aa).

The first 22 residues, 1-22 (MNNFRQCALCIGTSVLILLVSG), serve as a signal peptide directing secretion. Cysteine 23 carries the N-palmitoyl cysteine lipid modification. Cysteine 23 is lipidated: S-diacylglycerol cysteine.

Belongs to the staphylococcal tandem lipoprotein family.

It localises to the cell membrane. This is an uncharacterized protein from Staphylococcus aureus (strain bovine RF122 / ET3-1).